Consider the following 115-residue polypeptide: uncharacterized protein (115 aa).

The segment covering 90 to 100 has biased composition (basic residues); sequence THFGRPATRRR. The disordered stretch occupies residues 90 to 115; that stretch reads THFGRPATRRRPLGEREVNPSARSLG.

This is an uncharacterized protein from Saccharomyces cerevisiae (strain ATCC 204508 / S288c) (Baker's yeast).